We begin with the raw amino-acid sequence, 448 residues long: Probable glycine dehydrogenase (decarboxylating) subunit 1 (448 aa).

Belongs to the GcvP family. N-terminal subunit subfamily. As to quaternary structure, the glycine cleavage system is composed of four proteins: P, T, L and H. In this organism, the P 'protein' is a heterodimer of two subunits.

It carries out the reaction N(6)-[(R)-lipoyl]-L-lysyl-[glycine-cleavage complex H protein] + glycine + H(+) = N(6)-[(R)-S(8)-aminomethyldihydrolipoyl]-L-lysyl-[glycine-cleavage complex H protein] + CO2. The glycine cleavage system catalyzes the degradation of glycine. The P protein binds the alpha-amino group of glycine through its pyridoxal phosphate cofactor; CO(2) is released and the remaining methylamine moiety is then transferred to the lipoamide cofactor of the H protein. This chain is Probable glycine dehydrogenase (decarboxylating) subunit 1, found in Listeria monocytogenes serotype 4b (strain CLIP80459).